The sequence spans 378 residues: Sperm microtubule associated protein 2 (378 aa).

Disordered regions lie at residues methionine 1–serine 35 and tryptophan 47–valine 79. Positions tryptophan 47 to glutamate 56 are enriched in polar residues. The span at aspartate 61–proline 77 shows a compositional bias: acidic residues. 7 THEG repeats span residues alanine 113–asparagine 132, threonine 179–phenylalanine 198, serine 217–arginine 236, alanine 253–proline 272, proline 285–leucine 304, valine 321–arginine 340, and alanine 355–isoleucine 374. A Phosphoserine modification is found at serine 290.

As to quaternary structure, interacts with CCT5.

The protein resides in the nucleus. Functionally, may be involved (but not essential) in spermatogenesis. This Rattus norvegicus (Rat) protein is Sperm microtubule associated protein 2.